The following is a 492-amino-acid chain: MSSWKDSLTSIPGTVAQLINESASNLLHASSTLGSTVGLGGSGSTGSGSEAGGSEESGPQGAEYRALPIPASLVREQWRLIFTSDANIQDLQAAIAHCRDLVLLSEELSEERRWLVRHLVDLRYSLQELEEAQEQHSLSSDMVVMNAIRAVVGHHFVPHHPHHGKRNRLQAAAKRNYCDHCTTIIWSVVQNSYVCSDCGFLVHQKCIDGVKRVCAHVLVSERQHPISEICPEIGLASQGYKCAECGTMLNIKNTWIEPRLCDYSGLYYCPRCNWNDSNFIPARIIHNWDFSPRRVSRTALQEIRLFLNKPLIRLEEDNPKLFVFVEKLCAVKKLRQNLVHMRHYLAACKIASELKLVDQQLGVRRHLAQSNEFYSLSDLSQVESGALSEFLQGVFKAFNDHIRSCPMCLAQAYICEICSNNEVIFPFDDGCIKCDQCNSIFHRVCLTRKNMICPKCIRIQERRLQLDRMKSTEDDDDDDDGVATDDDVTAAE.

Residues 38–51 (GLGGSGSTGSGSEA) show a composition bias toward gly residues. The interval 38–62 (GLGGSGSTGSGSEAGGSEESGPQGA) is disordered. 2 consecutive Phorbol-ester/DAG-type zinc fingers follow at residues 161–214 (PHHG…KRVC) and 400–453 (DHIR…NMIC). The disordered stretch occupies residues 468–492 (RMKSTEDDDDDDDGVATDDDVTAAE). A compositionally biased stretch (acidic residues) spans 473–492 (EDDDDDDDGVATDDDVTAAE).

This sequence belongs to the DEF8 family.

This Drosophila melanogaster (Fruit fly) protein is Differentially expressed in FDCP 8 homolog.